Reading from the N-terminus, the 139-residue chain is GSK3B-interacting protein (139 aa).

Residues 1–22 are disordered; that stretch reads METDCNPMELSSMSGFEEGSEL. The required for PRKAR2A interaction; contributes to a protective effect against H(2)O(2)-induced apoptosis stretch occupies residues 41–45; it reads VNDVL. Positions 115-139 are interaction with GSK3B and acts as a GSK3B inhibitor; it reads SPAYREAFGNALLQRLEALKRDGQS.

This sequence belongs to the GSKIP family. Forms a complex composed of PRKAR2A or PRKAR2B, GSK3B and GSKIP through GSKIP interaction; facilitates PKA-induced phosphorylation of GSK3B leading to GSK3B inactivation; recruits DNM1L through GSK3B for PKA-mediated phosphorylation of DNM1L; promotes beta-catenin degradation through GSK3B-induced phosphorylation of beta-catenin; stabilizes beta-catenin and enhances Wnt-induced signaling through PKA-induced phosphorylation of beta-catenin. Interacts with GSK3B; induces GSK3B-mediated phosphorylation of GSKIP and inhibits GSK3B kinase activity. Phosphorylated by GSK3B. Detected in heart, brain, placenta, liver, skeletal muscle, kidney, testis, lung and pancreas.

The protein localises to the cytoplasm. It is found in the nucleus. A-kinase anchoring protein for GSK3B and PKA that regulates or facilitates their kinase activity towards their targets. The ternary complex enhances Wnt-induced signaling by facilitating the GSK3B- and PKA-induced phosphorylation of beta-catenin leading to beta-catenin degradation and stabilization respectively. Upon cAMP activation, the ternary complex contributes to neuroprotection against oxidative stress-induced apoptosis by facilitating the PKA-induced phosphorylation of DML1 and PKA-induced inactivation of GSK3B. During neurite outgrowth promotes neuron proliferation; while increases beta-catenin-induced transcriptional activity through GSK3B kinase activity inhibition, reduces N-cadherin level to promote cell cycle progression. The chain is GSK3B-interacting protein from Homo sapiens (Human).